A 1086-amino-acid polypeptide reads, in one-letter code: 1,2-beta-oligoglucan phosphorylase (1086 aa).

The Proton donor role is filled by Asp741.

Belongs to the glycosyl hydrolase 94 family. In terms of assembly, monomer.

It catalyses the reaction [(1-&gt;2)-beta-D-glucosyl](n) + phosphate = [(1-&gt;2)-beta-D-glucosyl](n-1) + alpha-D-glucose 1-phosphate. Functionally, catalyzes the reversible phosphorolysis of beta-(1-&gt;2)-D-glucans. The minimum length of the substrate for the phosphorolytic reaction is 3 D-glucose units. This chain is 1,2-beta-oligoglucan phosphorylase, found in Listeria innocua serovar 6a (strain ATCC BAA-680 / CLIP 11262).